The primary structure comprises 376 residues: Alkanesulfonate monooxygenase (376 aa).

Belongs to the SsuD family.

It catalyses the reaction an alkanesulfonate + FMNH2 + O2 = an aldehyde + FMN + sulfite + H2O + 2 H(+). Its function is as follows. Catalyzes the desulfonation of aliphatic sulfonates. The polypeptide is Alkanesulfonate monooxygenase (Bacillus licheniformis (strain ATCC 14580 / DSM 13 / JCM 2505 / CCUG 7422 / NBRC 12200 / NCIMB 9375 / NCTC 10341 / NRRL NRS-1264 / Gibson 46)).